Consider the following 1389-residue polypeptide: DNA-directed RNA polymerase subunit beta'' (1389 aa).

Residues Cys-224, Cys-295, Cys-302, and Cys-305 each contribute to the Zn(2+) site.

This sequence belongs to the RNA polymerase beta' chain family. RpoC2 subfamily. In plastids the minimal PEP RNA polymerase catalytic core is composed of four subunits: alpha, beta, beta', and beta''. When a (nuclear-encoded) sigma factor is associated with the core the holoenzyme is formed, which can initiate transcription. Requires Zn(2+) as cofactor.

The protein localises to the plastid. The protein resides in the chloroplast. It catalyses the reaction RNA(n) + a ribonucleoside 5'-triphosphate = RNA(n+1) + diphosphate. Functionally, DNA-dependent RNA polymerase catalyzes the transcription of DNA into RNA using the four ribonucleoside triphosphates as substrates. This chain is DNA-directed RNA polymerase subunit beta'', found in Morus indica (Mulberry).